A 398-amino-acid chain; its full sequence is DNA-directed RNA polymerase III subunit RPC4 (398 aa).

The interval 1–149 (MSEGNAAGEP…IKKEKRETDE (149 aa)) is disordered. Serine 2 bears the N-acetylserine mark. A Phosphoserine modification is found at serine 42. Basic and acidic residues-rich tracts occupy residues 66-100 (KIKE…RGRP), 116-128 (MMKK…KTVD), and 140-149 (IKKEKRETDE). Residues lysine 68 and lysine 78 each participate in a glycyl lysine isopeptide (Lys-Gly) (interchain with G-Cter in SUMO2) cross-link. Omega-N-methylarginine is present on residues arginine 95, arginine 97, and arginine 99. Glycyl lysine isopeptide (Lys-Gly) (interchain with G-Cter in SUMO2) cross-links involve residues lysine 141, lysine 152, lysine 160, lysine 190, lysine 199, lysine 206, lysine 220, lysine 285, lysine 302, and lysine 396. Residues 191 to 244 (EESEEPEAKPFSAGPKEEDMEVDVPAVKVKEEPRDEEEEAKVKAPPRAARKTPG) are disordered.

It belongs to the eukaryotic RPC4/POLR3D RNA polymerase subunit family. In terms of assembly, component of the RNA polymerase III complex consisting of 17 subunits: a ten-subunit horseshoe-shaped catalytic core composed of POLR3A/RPC1, POLR3B/RPC2, POLR1C/RPAC1, POLR1D/RPAC2, POLR3K/RPC10, POLR2E/RPABC1, POLR2F/RPABC2, POLR2H/RPABC3, POLR2K/RPABC4 and POLR2L/RPABC5; a mobile stalk composed of two subunits POLR3H/RPC8 and CRCP/RPC9, protruding from the core and functioning primarily in transcription initiation; and additional subunits homologous to general transcription factors of the RNA polymerase II machinery, POLR3C/RPC3-POLR3F/RPC6-POLR3G/RPC7 heterotrimer required for transcription initiation and POLR3D/RPC4-POLR3E/RPC5 heterodimer involved in both transcription initiation and termination. In terms of processing, sumoylation on Lys-141 can serve as a signal to mark misfolded Pol III for proteasomal degradation.

The protein localises to the nucleus. Functionally, DNA-dependent RNA polymerase catalyzes the transcription of DNA into RNA using the four ribonucleoside triphosphates as substrates. Specific peripheric component of RNA polymerase III (Pol III) which synthesizes small non-coding RNAs including 5S rRNA, snRNAs, tRNAs and miRNAs from at least 500 distinct genomic loci. Enables recruitment of Pol III at transcription initiation site and drives transcription initiation from both type 2 and type 3 DNA promoters. Required for efficient transcription termination and reinitiation. Pol III plays a key role in sensing and limiting infection by intracellular bacteria and DNA viruses. Acts as nuclear and cytosolic DNA sensor involved in innate immune response. Can sense non-self dsDNA that serves as template for transcription into dsRNA. The non-self RNA polymerase III transcripts, such as Epstein-Barr virus-encoded RNAs (EBERs) induce type I interferon and NF-kappa-B through the RIG-I pathway. In Mus musculus (Mouse), this protein is DNA-directed RNA polymerase III subunit RPC4.